A 201-amino-acid polypeptide reads, in one-letter code: MELVLKDAQSALTVSETTFGRDFNEALVHQVVVAYAAGARQGTRAQKTRAEVTGSGKKPWRQKGTGRARSGSIKSPIWRSGGVTFAARPQDHSQKVNKKMYRGALKSILSELVRQDRLIVVEKFSVEAPKTKLLAQKLKDMALEDVLIITGELDENLFLAARNLQKVDVRDATGIDPVSLIAFDKVVMTADAVKQVEEMLA.

A disordered region spans residues 44–71 (RAQKTRAEVTGSGKKPWRQKGTGRARSG).

This sequence belongs to the universal ribosomal protein uL4 family. In terms of assembly, part of the 50S ribosomal subunit.

Its function is as follows. One of the primary rRNA binding proteins, this protein initially binds near the 5'-end of the 23S rRNA. It is important during the early stages of 50S assembly. It makes multiple contacts with different domains of the 23S rRNA in the assembled 50S subunit and ribosome. In terms of biological role, forms part of the polypeptide exit tunnel. This chain is Large ribosomal subunit protein uL4, found in Shigella flexneri serotype 5b (strain 8401).